The sequence spans 122 residues: UPF0102 protein cgR_1859 (122 aa).

Belongs to the UPF0102 family.

The chain is UPF0102 protein cgR_1859 from Corynebacterium glutamicum (strain R).